The following is a 190-amino-acid chain: MLLSDRDIRAEFQAGRLGLDPFDDSLIQPSSVDVRLDNLFRVFNNTRYTHIDPAQRQDDLTSLVEPKEGEPFVLHPGEFVLGATLERCTLPDDLAGRLEGKSSLGRLGLLTHSTAGFIDPGFSGHITLELSNVANLPITLWPGMKIGQLCLLRLTSPAQHPYGSSQVGSKYQGQRGPTPSKSYQNFVKSN.

DCTP is bound by residues 101–106, D119, 127–129, Q148, Y162, and Q174; these read KSSLGR and TLE. Residue E129 is the Proton donor/acceptor of the active site. The segment at 163-190 is disordered; sequence GSSQVGSKYQGQRGPTPSKSYQNFVKSN.

Belongs to the dCTP deaminase family. Homotrimer.

The catalysed reaction is dCTP + 2 H2O = dUMP + NH4(+) + diphosphate. The protein operates within pyrimidine metabolism; dUMP biosynthesis; dUMP from dCTP: step 1/1. Bifunctional enzyme that catalyzes both the deamination of dCTP to dUTP and the hydrolysis of dUTP to dUMP without releasing the toxic dUTP intermediate. In Mycolicibacterium gilvum (strain PYR-GCK) (Mycobacterium gilvum (strain PYR-GCK)), this protein is dCTP deaminase, dUMP-forming.